Here is a 411-residue protein sequence, read N- to C-terminus: MLQQVPTRAFHVMAKPSGSDCNLNCDYCFYLEKQSLYREKPVTHMDDDTLEAYVRHYIAASEPQNEVAFTWQGGEPTLLGLAFYRRAVALQAKYGAGRKISNSFQTNGVLLDDEWCAFLAEHHFLVGLSLDGPPEIHNQYRVTKGGRPTHKLVMRALTLLQKHHVDYNVLVCVNRTSAQQPLQVYDFLCDAGVEFIQFIPVVERLADETTARDGLKLHAPGDIQGELTEWSVRPEEFGEFLVAIFDHWIKRDVGKIFVMNIEWAFANFVGAPGAVCHHQPTCGRSVIVEHNGDVYACDHYVYPQYRLGNMHQQTIAEMIDSPQQQAFGEDKFKQLPAQCRSCNVLKACWGGCPKHRFMLDASGKPGLNYLCAGYQRYFRHLPPYLKAMADLLAHGRPASDIMHAHLLVVSK.

Positions 3-250 (QQVPTRAFHV…LVAIFDHWIK (248 aa)) constitute a Radical SAM core domain. 2 residues coordinate [4Fe-4S] cluster: C21 and C25. Y27 provides a ligand contact to S-adenosyl-L-methionine. C28 lines the [4Fe-4S] cluster pocket. Residues G74, S129, and R141 each coordinate S-adenosyl-L-methionine. Residues C276, C282, and C297 each contribute to the [4Fe-4S] cluster site. D298 serves as the catalytic Proton acceptor. [4Fe-4S] cluster-binding residues include C339, C342, C348, C352, and C371.

Belongs to the radical SAM superfamily. Anaerobic sulfatase-maturating enzyme family. Requires [4Fe-4S] cluster as cofactor.

This Escherichia coli (strain K12) protein is Anaerobic sulfatase-maturating enzyme homolog AslB (aslB).